A 511-amino-acid polypeptide reads, in one-letter code: Exodeoxyribonuclease 7 large subunit (511 aa).

This sequence belongs to the XseA family. As to quaternary structure, heterooligomer composed of large and small subunits.

The protein localises to the cytoplasm. The catalysed reaction is Exonucleolytic cleavage in either 5'- to 3'- or 3'- to 5'-direction to yield nucleoside 5'-phosphates.. In terms of biological role, bidirectionally degrades single-stranded DNA into large acid-insoluble oligonucleotides, which are then degraded further into small acid-soluble oligonucleotides. The polypeptide is Exodeoxyribonuclease 7 large subunit (Brucella ovis (strain ATCC 25840 / 63/290 / NCTC 10512)).